The primary structure comprises 874 residues: Alanine--tRNA ligase (874 aa).

Residues histidine 562, histidine 566, cysteine 664, and histidine 668 each coordinate Zn(2+).

The protein belongs to the class-II aminoacyl-tRNA synthetase family. The cofactor is Zn(2+).

It localises to the cytoplasm. It catalyses the reaction tRNA(Ala) + L-alanine + ATP = L-alanyl-tRNA(Ala) + AMP + diphosphate. Its function is as follows. Catalyzes the attachment of alanine to tRNA(Ala) in a two-step reaction: alanine is first activated by ATP to form Ala-AMP and then transferred to the acceptor end of tRNA(Ala). Also edits incorrectly charged Ser-tRNA(Ala) and Gly-tRNA(Ala) via its editing domain. The polypeptide is Alanine--tRNA ligase (Neisseria meningitidis serogroup C (strain 053442)).